A 238-amino-acid polypeptide reads, in one-letter code: Large ribosomal subunit protein uL1 (238 aa).

This sequence belongs to the universal ribosomal protein uL1 family. As to quaternary structure, part of the 50S ribosomal subunit.

Its function is as follows. Binds directly to 23S rRNA. The L1 stalk is quite mobile in the ribosome, and is involved in E site tRNA release. Protein L1 is also a translational repressor protein, it controls the translation of the L11 operon by binding to its mRNA. The chain is Large ribosomal subunit protein uL1 from Salinispora arenicola (strain CNS-205).